A 127-amino-acid polypeptide reads, in one-letter code: Class I hydrophobin 1 (127 aa).

An N-terminal signal peptide occupies residues 1–20 (MLSLLSKAVSLAILVTAVVA). 4 disulfides stabilise this stretch: Cys53–Cys108, Cys60–Cys102, Cys61–Cys94, and Cys109–Cys122. Asn66 carries an N-linked (GlcNAc...) asparagine glycan.

The protein belongs to the fungal hydrophobin family. As to quaternary structure, self-assembles to form functional amyloid fibrils called rodlets. Self-assembly into fibrillar rodlets occurs spontaneously at hydrophobic:hydrophilic interfaces and the rodlets further associate laterally to form amphipathic monolayers. As to expression, expressed everywhere in the mycelial tissues of developing fruiting bodies except for the top parts of the pileus (cap) and for the prehymenophore; but high level of the transcript is detected in the parts surrounding the prehymenophore.

The protein localises to the secreted. It localises to the cell wall. Its function is as follows. Aerial growth, conidiation, and dispersal of filamentous fungi in the environment rely upon a capability of their secreting small amphipathic proteins called hydrophobins (HPBs) with low sequence identity. Class I can self-assemble into an outermost layer of rodlet bundles on aerial cell surfaces, conferring cellular hydrophobicity that supports fungal growth, development and dispersal; whereas Class II form highly ordered films at water-air interfaces through intermolecular interactions but contribute nothing to the rodlet structure. Hyd1 is a class I hydrophobin that plays a role in fruiting body initiation rather than in mature fruit body maintenance. Seems to be involved in the formation in the extracellular matrix of lined air channels with a hydrophobic membrane. These channels may help to provide gas exchange during respiration in mycelial tissues of developing fruiting bodies and are formed all over the mycelial tissues of these developing fruiting bodies except for the top parts of the pileus (cap) and for the prehymenophore. This Lentinula edodes (Shiitake mushroom) protein is Class I hydrophobin 1.